Consider the following 178-residue polypeptide: Large ribosomal subunit protein uL5 (178 aa).

The protein belongs to the universal ribosomal protein uL5 family. Part of the 50S ribosomal subunit; part of the 5S rRNA/L5/L18/L25 subcomplex. Contacts the 5S rRNA and the P site tRNA. Forms a bridge to the 30S subunit in the 70S ribosome.

Functionally, this is one of the proteins that bind and probably mediate the attachment of the 5S RNA into the large ribosomal subunit, where it forms part of the central protuberance. In the 70S ribosome it contacts protein S13 of the 30S subunit (bridge B1b), connecting the 2 subunits; this bridge is implicated in subunit movement. Contacts the P site tRNA; the 5S rRNA and some of its associated proteins might help stabilize positioning of ribosome-bound tRNAs. In Prochlorococcus marinus subsp. pastoris (strain CCMP1986 / NIES-2087 / MED4), this protein is Large ribosomal subunit protein uL5.